Here is a 272-residue protein sequence, read N- to C-terminus: GPN-loop GTPase 3 (272 aa).

GTP is bound at residue 12–17; it reads GAGKST. Positions 69–71 match the Gly-Pro-Asn (GPN)-loop; involved in dimer interface motif; that stretch reads GPN. Position 172–175 (172–175) interacts with GTP; that stretch reads SKMD. Residues 253–272 are disordered; that stretch reads QYGEDEEPKVPKDMDDGDFD.

This sequence belongs to the GPN-loop GTPase family. In terms of assembly, heterodimers with GPN1 or GPN2. Binds to RNA polymerase II (RNAPII).

In terms of biological role, small GTPase required for proper nuclear import of RNA polymerase II and III (RNAPII and RNAPIII). May act at an RNAP assembly step prior to nuclear import. The sequence is that of GPN-loop GTPase 3 from Cryptococcus neoformans var. neoformans serotype D (strain JEC21 / ATCC MYA-565) (Filobasidiella neoformans).